Consider the following 134-residue polypeptide: Small ribosomal subunit protein uS8 (134 aa).

The protein belongs to the universal ribosomal protein uS8 family. Part of the 30S ribosomal subunit. Contacts proteins S5 and S12.

One of the primary rRNA binding proteins, it binds directly to 16S rRNA central domain where it helps coordinate assembly of the platform of the 30S subunit. In Thermotoga maritima (strain ATCC 43589 / DSM 3109 / JCM 10099 / NBRC 100826 / MSB8), this protein is Small ribosomal subunit protein uS8.